The primary structure comprises 306 residues: D-alanine--D-alanine ligase (306 aa).

The 194-residue stretch at 107–300 folds into the ATP-grasp domain; that stretch reads KAAYRTAGLP…FGQLCAWLVE (194 aa). 134–184 lines the ATP pocket; the sequence is IAPPYVVKPNNEGSSVGIYIVHEATNSPPQLSEEMPAQVMVEAYAPGREMT. The Mg(2+) site is built by aspartate 251, glutamate 267, and asparagine 269.

It belongs to the D-alanine--D-alanine ligase family. It depends on Mg(2+) as a cofactor. Mn(2+) is required as a cofactor.

The protein resides in the cytoplasm. The enzyme catalyses 2 D-alanine + ATP = D-alanyl-D-alanine + ADP + phosphate + H(+). It functions in the pathway cell wall biogenesis; peptidoglycan biosynthesis. Its function is as follows. Cell wall formation. This chain is D-alanine--D-alanine ligase, found in Ruegeria sp. (strain TM1040) (Silicibacter sp.).